The sequence spans 448 residues: Homogentisate 1,2-dioxygenase (448 aa).

The disordered stretch occupies residues 1–26; that stretch reads MNMLAPAAKNAFTPASPDRPAYQSGF. H302 acts as the Proton acceptor in catalysis. Residues H345 and E351 each coordinate Fe cation. Residues Y360 and H381 each coordinate homogentisate. H381 provides a ligand contact to Fe cation.

The protein belongs to the homogentisate dioxygenase family. In terms of assembly, hexamer; dimer of trimers. The cofactor is Fe cation.

The enzyme catalyses homogentisate + O2 = 4-maleylacetoacetate + H(+). Its pathway is amino-acid degradation; L-phenylalanine degradation; acetoacetate and fumarate from L-phenylalanine: step 4/6. Functionally, involved in the catabolism of homogentisate (2,5-dihydroxyphenylacetate or 2,5-OH-PhAc), a central intermediate in the degradation of phenylalanine and tyrosine. Catalyzes the oxidative ring cleavage of the aromatic ring of homogentisate to yield maleylacetoacetate. The polypeptide is Homogentisate 1,2-dioxygenase (Ralstonia nicotianae (strain ATCC BAA-1114 / GMI1000) (Ralstonia solanacearum)).